The sequence spans 245 residues: 2,3-bisphosphoglycerate-dependent phosphoglycerate mutase (245 aa).

Substrate is bound by residues 8–15, 21–22, Arg-60, 87–90, Lys-98, 114–115, and 183–184; these read RHGQSLWN, TG, ERHY, RR, and GN. His-9 serves as the catalytic Tele-phosphohistidine intermediate. Glu-87 (proton donor/acceptor) is an active-site residue.

The protein belongs to the phosphoglycerate mutase family. BPG-dependent PGAM subfamily.

It catalyses the reaction (2R)-2-phosphoglycerate = (2R)-3-phosphoglycerate. The protein operates within carbohydrate degradation; glycolysis; pyruvate from D-glyceraldehyde 3-phosphate: step 3/5. Its function is as follows. Catalyzes the interconversion of 2-phosphoglycerate and 3-phosphoglycerate. This Bacillus anthracis (strain A0248) protein is 2,3-bisphosphoglycerate-dependent phosphoglycerate mutase.